The following is a 419-amino-acid chain: Zinc finger protein Pegasus (419 aa).

Lysine 5 participates in a covalent cross-link: Glycyl lysine isopeptide (Lys-Gly) (interchain with G-Cter in SUMO2). The tract at residues 36-55 is disordered; that stretch reads DKEAETLQGAGTDGDQNGLD. 3 consecutive C2H2-type zinc fingers follow at residues 82-104, 110-132, and 138-161; these read LKCRYCNYASKGTARLIEHIRIH, HRCHLCPFASAYERHLEAHMRSH, and YKCELCSFRCSDRSNLSHHRRRKH. Residue lysine 185 forms a Glycyl lysine isopeptide (Lys-Gly) (interchain with G-Cter in SUMO2) linkage. Residues 262-273 show a composition bias toward polar residues; the sequence is LSSLPPENQNPA. Disordered regions lie at residues 262–284 and 297–356; these read LSSLPPENQNPASPDVDACPDEK and VSAV…PTLP. Residues 297–311 show a composition bias toward low complexity; the sequence is VSAVSASIPQSSSPT. Residues 332 to 349 are compositionally biased toward polar residues; sequence SEPSAHTSTPSIGNSQPS. C2H2-type zinc fingers lie at residues 364–386 and 392–416; these read HHCQHCDVYFADNVLYTVHMGCH and FQCNVCGCKCKDKYDFACHFARGQH.

The protein belongs to the Ikaros C2H2-type zinc-finger protein family. Self-associates. Interacts with other family members; IKZF1, IKZF2, IKZF3 and IKZF4.

The protein resides in the nucleus. Its function is as follows. Transcriptional repressor that binds the core 5'GNNTGTNG-3' DNA consensus sequence. Involved in megakaryocyte differentiation. This is Zinc finger protein Pegasus (Ikzf5) from Mus musculus (Mouse).